The sequence spans 480 residues: Argininosuccinate lyase (480 aa).

The segment covering 1 to 17 (MTDTTPSADLGASSQQP) has biased composition (polar residues). Residues 1 to 24 (MTDTTPSADLGASSQQPAKAWSGR) form a disordered region.

This sequence belongs to the lyase 1 family. Argininosuccinate lyase subfamily.

The protein resides in the cytoplasm. It carries out the reaction 2-(N(omega)-L-arginino)succinate = fumarate + L-arginine. It functions in the pathway amino-acid biosynthesis; L-arginine biosynthesis; L-arginine from L-ornithine and carbamoyl phosphate: step 3/3. This is Argininosuccinate lyase from Azoarcus sp. (strain BH72).